Consider the following 552-residue polypeptide: CTP synthase (552 aa).

Positions 1–270 (MTKYVFVTGG…DRIICEELKL (270 aa)) are amidoligase domain. Ser-13 provides a ligand contact to CTP. A UTP-binding site is contributed by Ser-13. Residues 14–19 (SLGKGI) and Asp-71 each bind ATP. Residues Asp-71 and Glu-144 each coordinate Mg(2+). Residues 151-153 (DIE), 191-196 (KTKPTQ), and Lys-227 contribute to the CTP site. UTP-binding positions include 191-196 (KTKPTQ) and Lys-227. In terms of domain architecture, Glutamine amidotransferase type-1 spans 295–547 (TIGMVGKYVD…VEAALANKQA (253 aa)). Gly-356 provides a ligand contact to L-glutamine. Catalysis depends on Cys-383, which acts as the Nucleophile; for glutamine hydrolysis. L-glutamine contacts are provided by residues 384–387 (LGMQ), Glu-407, and Arg-473. Catalysis depends on residues His-520 and Glu-522.

This sequence belongs to the CTP synthase family. In terms of assembly, homotetramer.

It catalyses the reaction UTP + L-glutamine + ATP + H2O = CTP + L-glutamate + ADP + phosphate + 2 H(+). It carries out the reaction L-glutamine + H2O = L-glutamate + NH4(+). The enzyme catalyses UTP + NH4(+) + ATP = CTP + ADP + phosphate + 2 H(+). The protein operates within pyrimidine metabolism; CTP biosynthesis via de novo pathway; CTP from UDP: step 2/2. Its activity is regulated as follows. Allosterically activated by GTP, when glutamine is the substrate; GTP has no effect on the reaction when ammonia is the substrate. The allosteric effector GTP functions by stabilizing the protein conformation that binds the tetrahedral intermediate(s) formed during glutamine hydrolysis. Inhibited by the product CTP, via allosteric rather than competitive inhibition. In terms of biological role, catalyzes the ATP-dependent amination of UTP to CTP with either L-glutamine or ammonia as the source of nitrogen. Regulates intracellular CTP levels through interactions with the four ribonucleotide triphosphates. In Burkholderia ambifaria (strain MC40-6), this protein is CTP synthase.